The primary structure comprises 51 residues: Insulin (51 aa).

Cystine bridges form between Cys-7–Cys-37, Cys-19–Cys-50, and Cys-36–Cys-41.

Belongs to the insulin family. Heterodimer of a B chain and an A chain linked by two disulfide bonds.

It localises to the secreted. In terms of biological role, insulin decreases blood glucose concentration. It increases cell permeability to monosaccharides, amino acids and fatty acids. It accelerates glycolysis, the pentose phosphate cycle, and glycogen synthesis in liver. In Ptyas dhumnades (Big-eyed ratsnake), this protein is Insulin (INS).